The primary structure comprises 219 residues: VQ motif-containing protein 19 (219 aa).

Positions 47–56 (FKQVVQMLTG) match the VQ motif. The segment at 52 to 94 (QMLTGSSSPRSPDSPRPPTTPSGKGNFVIPPIKTAQPKKHSGN) is disordered. Residues Ser-59, Ser-65, Ser-127, Ser-131, Ser-139, Ser-141, and Ser-152 each carry the phosphoserine modification. Thr-155 carries the post-translational modification Phosphothreonine. 2 disordered regions span residues 156-177 (PLKQGTNGNEGDPFDKMSPLSE) and 190-219 (HRSPISTPRDSEPQLLPLFPVTSPRLSPEM). Phosphoserine is present on residues Ser-192 and Ser-195. 2 positions are modified to phosphothreonine: Thr-196 and Thr-211. Residues Ser-212 and Ser-216 each carry the phosphoserine modification.

Post-translationally, phosphorylated on serine and threonine residues by MPK6.

Its subcellular location is the nucleus. Functionally, may modulate WRKY transcription factor activities. In Arabidopsis thaliana (Mouse-ear cress), this protein is VQ motif-containing protein 19.